The primary structure comprises 221 residues: Octanoyltransferase (221 aa).

The BPL/LPL catalytic domain occupies 31-216 (GQIGDTLLLL…SLCAIFDLRP (186 aa)). Residues 76–83 (RGGEVTYH), 145–147 (AIG), and 159–161 (GLA) each bind substrate. Catalysis depends on Cys177, which acts as the Acyl-thioester intermediate.

The protein belongs to the LipB family.

The protein localises to the cytoplasm. It carries out the reaction octanoyl-[ACP] + L-lysyl-[protein] = N(6)-octanoyl-L-lysyl-[protein] + holo-[ACP] + H(+). It participates in protein modification; protein lipoylation via endogenous pathway; protein N(6)-(lipoyl)lysine from octanoyl-[acyl-carrier-protein]: step 1/2. Functionally, catalyzes the transfer of endogenously produced octanoic acid from octanoyl-acyl-carrier-protein onto the lipoyl domains of lipoate-dependent enzymes. Lipoyl-ACP can also act as a substrate although octanoyl-ACP is likely to be the physiological substrate. This chain is Octanoyltransferase, found in Chloroflexus aggregans (strain MD-66 / DSM 9485).